The primary structure comprises 495 residues: Tripartite motif-containing protein 5 (495 aa).

Ala-2 carries the N-acetylalanine modification. An RING-type zinc finger spans residues 15–60 (CPICLELLTEPLSLPCGHSFCQACITANHKKSMLYKEEERSCPVCR). Position 87 is a phosphoserine (Ser-87). The segment at 92–133 (QKVDHCARHGEKLLLFCQEDRKVICWLCERSQEHRGHHTFLM) adopts a B box-type zinc-finger fold. Cys-97, His-100, Cys-119, and His-125 together coordinate Zn(2+). The stretch at 137-177 (AQEYHVKLQTALEMLRQKQQEAEKLEADIREEKASWKIQID) forms a coiled coil. A required for interaction with GABARAP and for autophagy region spans residues 187 to 200 (FEQLREILDWEESN). The B30.2/SPRY domain maps to 283–495 (LKGMLDMFRE…VPMTLCSPSS (213 aa)).

The protein belongs to the TRIM/RBCC family. As to quaternary structure, can form homodimers and homotrimers. In addition to lower-order dimerization, also exhibits a higher-order multimerization and both low- and high-order multimerizations are essential for its restriction activity. Interacts with BTBD1 and BTBD2. Interacts with PSMC4, PSMC5, PSMD7 and HSPA8/HSC70. Interacts (via B30.2/SPRY domain) with HSPA1A/B. Interacts with PSMC2, MAP3K7/TAK1, TAB2 and TAB3. Interacts with SQSTM1. Interacts with TRIM6 and TRIM34. Interacts with ULK1 (phosphorylated form), GABARAP, GABARAPL1, GABARAPL2, MAP1LC3A, MAP1LC3C and BECN1. In terms of processing, degraded in a proteasome-independent fashion in the absence of viral infection but in a proteasome-dependent fashion following exposure to restriction sensitive virus. Post-translationally, autoubiquitinated in a RING finger- and UBE2D2-dependent manner. Monoubiquitinated by TRIM21. Deubiquitinated by Yersinia YopJ. Ubiquitination may not lead to proteasomal degradation.

The protein localises to the cytoplasm. It is found in the nucleus. The enzyme catalyses S-ubiquitinyl-[E2 ubiquitin-conjugating enzyme]-L-cysteine + [acceptor protein]-L-lysine = [E2 ubiquitin-conjugating enzyme]-L-cysteine + N(6)-ubiquitinyl-[acceptor protein]-L-lysine.. The protein operates within protein modification; protein ubiquitination. In terms of biological role, capsid-specific restriction factor that prevents infection from non-host-adapted retroviruses. Blocks viral replication early in the life cycle, after viral entry but before reverse transcription. In addition to acting as a capsid-specific restriction factor, also acts as a pattern recognition receptor that activates innate immune signaling in response to the retroviral capsid lattice. Binding to the viral capsid triggers its E3 ubiquitin ligase activity, and in concert with the heterodimeric ubiquitin conjugating enzyme complex UBE2V1-UBE2N (also known as UBC13-UEV1A complex) generates 'Lys-63'-linked polyubiquitin chains, which in turn are catalysts in the autophosphorylation of the MAP3K7/TAK1 complex (includes TAK1, TAB2, and TAB3). Activation of the MAP3K7/TAK1 complex by autophosphorylation results in the induction and expression of NF-kappa-B and MAPK-responsive inflammatory genes, thereby leading to an innate immune response in the infected cell. Plays a role in regulating autophagy through activation of autophagy regulator BECN1 by causing its dissociation from its inhibitors BCL2 and TAB2. This is Tripartite motif-containing protein 5 (TRIM5) from Erythrocebus patas (Red guenon).